Here is a 195-residue protein sequence, read N- to C-terminus: Transcriptional regulator GfcR (195 aa).

The protein belongs to the purine/pyrimidine phosphoribosyltransferase family. GfcR subfamily.

The chain is Transcriptional regulator GfcR from Picrophilus torridus (strain ATCC 700027 / DSM 9790 / JCM 10055 / NBRC 100828 / KAW 2/3).